Consider the following 229-residue polypeptide: 7-cyano-7-deazaguanine synthase (229 aa).

8–18 (CSGGLDSSVIA) contributes to the ATP binding site. Residues C190, C203, C206, and C209 each coordinate Zn(2+).

It belongs to the QueC family. The cofactor is Zn(2+).

It catalyses the reaction 7-carboxy-7-deazaguanine + NH4(+) + ATP = 7-cyano-7-deazaguanine + ADP + phosphate + H2O + H(+). It participates in purine metabolism; 7-cyano-7-deazaguanine biosynthesis. Catalyzes the ATP-dependent conversion of 7-carboxy-7-deazaguanine (CDG) to 7-cyano-7-deazaguanine (preQ(0)). The protein is 7-cyano-7-deazaguanine synthase of Methanopyrus kandleri (strain AV19 / DSM 6324 / JCM 9639 / NBRC 100938).